Here is a 303-residue protein sequence, read N- to C-terminus: Leukocyte immunoglobulin-like receptor subfamily B member 4B (303 aa).

Residues 1–23 (MIAMLTVLLYLALILEPRTAVQA) form the signal peptide. The Extracellular segment spans residues 24-238 (GHLPKPIIWA…TEDGLETYQK (215 aa)). 2 consecutive Ig-like C2-type domains span residues 42–123 (YTSV…AYEN) and 124–212 (PSLS…KPSN). Cysteine 49 and cysteine 98 are disulfide-bonded. Asparagine 79, asparagine 133, and asparagine 191 each carry an N-linked (GlcNAc...) asparagine glycan. The cysteines at positions 144 and 196 are disulfide-linked. The helical transmembrane segment at 239–260 (ILIGVLVSFLLLFFLLLFLILI) threads the bilayer. Topologically, residues 261–303 (GYQCRHKNKANASVKNTQSEDNAELNSWNPQNEDPPRELCTPR) are cytoplasmic. Residues 275 to 292 (KNTQSEDNAELNSWNPQN) show a composition bias toward polar residues. A disordered region spans residues 275-303 (KNTQSEDNAELNSWNPQNEDPPRELCTPR).

In terms of assembly, monomer and homodimer. In terms of tissue distribution, expressed on mast cells (at protein level). Also expressed at much lower levels on natural killer cells (at protein level).

Its subcellular location is the cell membrane. Its function is as follows. Plays a role in mast cell activation. The polypeptide is Leukocyte immunoglobulin-like receptor subfamily B member 4B (Mus musculus (Mouse)).